The sequence spans 119 residues: Ribosome-binding factor A (119 aa).

It belongs to the RbfA family. Monomer. Binds 30S ribosomal subunits, but not 50S ribosomal subunits or 70S ribosomes.

Its subcellular location is the cytoplasm. One of several proteins that assist in the late maturation steps of the functional core of the 30S ribosomal subunit. Associates with free 30S ribosomal subunits (but not with 30S subunits that are part of 70S ribosomes or polysomes). Required for efficient processing of 16S rRNA. May interact with the 5'-terminal helix region of 16S rRNA. The polypeptide is Ribosome-binding factor A (Mycoplasmoides gallisepticum (strain R(low / passage 15 / clone 2)) (Mycoplasma gallisepticum)).